A 478-amino-acid chain; its full sequence is Putative L-amino-acid oxidase YobN (478 aa).

Residues serine 34, glutamate 53, arginine 61, and 80-81 (MR) contribute to the FAD site. Substrate is bound by residues arginine 81 and tyrosine 369. FAD is bound by residues glutamate 451 and 460-463 (MQGA).

Belongs to the flavin monoamine oxidase family. FIG1 subfamily. FAD serves as cofactor.

It catalyses the reaction an L-alpha-amino acid + O2 + H2O = a 2-oxocarboxylate + H2O2 + NH4(+). The chain is Putative L-amino-acid oxidase YobN (yobN) from Bacillus subtilis (strain 168).